A 127-amino-acid polypeptide reads, in one-letter code: Small ribosomal subunit protein bS6 (127 aa).

The segment covering 106–117 (ERKAQSEKKEAE) has biased composition (basic and acidic residues). A disordered region spans residues 106-127 (ERKAQSEKKEAEVSEGEGGTEA). Positions 118–127 (VSEGEGGTEA) are enriched in acidic residues.

The protein belongs to the bacterial ribosomal protein bS6 family.

Its function is as follows. Binds together with bS18 to 16S ribosomal RNA. The polypeptide is Small ribosomal subunit protein bS6 (Thermotoga neapolitana (strain ATCC 49049 / DSM 4359 / NBRC 107923 / NS-E)).